We begin with the raw amino-acid sequence, 406 residues long: Cysteine desulfurase (406 aa).

K226 is subject to N6-(pyridoxal phosphate)lysine. The Cysteine persulfide intermediate role is filled by C364.

Belongs to the class-V pyridoxal-phosphate-dependent aminotransferase family. Csd subfamily. As to quaternary structure, homodimer. Interacts with SufE and the SufBCD complex composed of SufB, SufC and SufD. The interaction with SufE is required to mediate the direct transfer of the sulfur atom from the S-sulfanylcysteine. The cofactor is pyridoxal 5'-phosphate.

The protein localises to the cytoplasm. It catalyses the reaction (sulfur carrier)-H + L-cysteine = (sulfur carrier)-SH + L-alanine. The enzyme catalyses L-selenocysteine + AH2 = hydrogenselenide + L-alanine + A + H(+). It functions in the pathway cofactor biosynthesis; iron-sulfur cluster biosynthesis. In terms of biological role, cysteine desulfurases mobilize the sulfur from L-cysteine to yield L-alanine, an essential step in sulfur metabolism for biosynthesis of a variety of sulfur-containing biomolecules. Component of the suf operon, which is activated and required under specific conditions such as oxidative stress and iron limitation. Acts as a potent selenocysteine lyase in vitro, that mobilizes selenium from L-selenocysteine. Selenocysteine lyase activity is however unsure in vivo. This Cronobacter sakazakii (strain ATCC BAA-894) (Enterobacter sakazakii) protein is Cysteine desulfurase.